Reading from the N-terminus, the 305-residue chain is UDP-N-acetylenolpyruvoylglucosamine reductase (305 aa).

The region spanning Arg-34–Lys-199 is the FAD-binding PCMH-type domain. Residue Arg-179 is part of the active site. Ser-228 serves as the catalytic Proton donor. Glu-298 is a catalytic residue.

This sequence belongs to the MurB family. FAD is required as a cofactor.

It localises to the cytoplasm. It carries out the reaction UDP-N-acetyl-alpha-D-muramate + NADP(+) = UDP-N-acetyl-3-O-(1-carboxyvinyl)-alpha-D-glucosamine + NADPH + H(+). The protein operates within cell wall biogenesis; peptidoglycan biosynthesis. Functionally, cell wall formation. This is UDP-N-acetylenolpyruvoylglucosamine reductase from Bradyrhizobium diazoefficiens (strain JCM 10833 / BCRC 13528 / IAM 13628 / NBRC 14792 / USDA 110).